A 295-amino-acid polypeptide reads, in one-letter code: 4-diphosphocytidyl-2-C-methyl-D-erythritol kinase (295 aa).

The active site involves Lys-22. 106–116 (PAGGGFGGGSS) is a binding site for ATP. Asp-148 is an active-site residue.

The protein belongs to the GHMP kinase family. IspE subfamily.

The catalysed reaction is 4-CDP-2-C-methyl-D-erythritol + ATP = 4-CDP-2-C-methyl-D-erythritol 2-phosphate + ADP + H(+). Its pathway is isoprenoid biosynthesis; isopentenyl diphosphate biosynthesis via DXP pathway; isopentenyl diphosphate from 1-deoxy-D-xylulose 5-phosphate: step 3/6. Functionally, catalyzes the phosphorylation of the position 2 hydroxy group of 4-diphosphocytidyl-2C-methyl-D-erythritol. This is 4-diphosphocytidyl-2-C-methyl-D-erythritol kinase from Xanthomonas oryzae pv. oryzae (strain MAFF 311018).